Consider the following 635-residue polypeptide: 1-deoxy-D-xylulose-5-phosphate synthase (635 aa).

Thiamine diphosphate contacts are provided by residues His74 and 115–117 (GHA). Residue Asp146 coordinates Mg(2+). Thiamine diphosphate-binding positions include 147–148 (GA), Asn175, Tyr285, and Glu367. A Mg(2+)-binding site is contributed by Asn175.

Belongs to the transketolase family. DXPS subfamily. In terms of assembly, homodimer. The cofactor is Mg(2+). Thiamine diphosphate is required as a cofactor.

It catalyses the reaction D-glyceraldehyde 3-phosphate + pyruvate + H(+) = 1-deoxy-D-xylulose 5-phosphate + CO2. It participates in metabolic intermediate biosynthesis; 1-deoxy-D-xylulose 5-phosphate biosynthesis; 1-deoxy-D-xylulose 5-phosphate from D-glyceraldehyde 3-phosphate and pyruvate: step 1/1. Catalyzes the acyloin condensation reaction between C atoms 2 and 3 of pyruvate and glyceraldehyde 3-phosphate to yield 1-deoxy-D-xylulose-5-phosphate (DXP). In Anaeromyxobacter sp. (strain Fw109-5), this protein is 1-deoxy-D-xylulose-5-phosphate synthase.